Consider the following 372-residue polypeptide: MKVLVTGANGFVGRNLCAHLAERGGIEVVPFTRESSVGNLPELIRSVDFIFHLAGVNRPEKPEEFKIGNSELTYALCEAVRSNGRAIPLLYTSSIQAEVDNEYGLSKRAAEEHLQVLGEDIGCPVYIFRLPNVFGKWSRPNYNSAVATFCHNIIRDIPIQINNSSAEITLVYIDDVVRTFMKVMDGKLSNAVSLQVEPQYQISVGELAEQLYEFRNSRKSLTTARVGSGLTRALYSTYLSFLPEDSFSYDVPMHSDPRGTFVEMLKTADSGQFSFFTAHPGVTRGGHYHHSKTEKFLVIKGMARFKFRNILTGAFYEICTNGEKAEIVETVPGWTHDITNVGTDDMVVMLWANEVFDRENPDTYACSVGEGA.

NAD(+) contacts are provided by residues 7–30 (GANG…EVVP), Leu-53, Tyr-103, and Lys-107. Residue Tyr-103 is the Proton acceptor of the active site. Residues Asn-132 and 279–282 (HPGV) each bind substrate.

This sequence belongs to the NAD(P)-dependent epimerase/dehydratase family. As to quaternary structure, homodimer.

The catalysed reaction is UDP-2-acetamido-2,6-dideoxy-beta-L-arabino-hex-4-ulose + NADH + H(+) = UDP-2-acetamido-2,6-dideoxy-beta-L-talose + NAD(+). The enzyme catalyses UDP-2-acetamido-2,6-dideoxy-beta-L-arabino-hex-4-ulose + NADPH + H(+) = UDP-2-acetamido-2,6-dideoxy-beta-L-talose + NADP(+). It functions in the pathway bacterial outer membrane biogenesis; LPS O-antigen biosynthesis. Its function is as follows. Bifunctional enzyme that mediates C-3 epimerization of the second intermediate followed by reduction at C-4 during serogroup O11 O-antigen biosynthesis, thus catalyzing the conversion of UDP-N-acetyl-D-glucosamine to precursors for the biosynthesis of O antigen. This Pseudomonas aeruginosa (strain ATCC 29260 / BCRC 12902 / CIP 102967 / NCIMB 11965 / PA103) protein is UDP-2-acetamido-2,6-beta-L-arabino-hexul-4-ose reductase.